The primary structure comprises 116 residues: Large ribosomal subunit protein bL19 (116 aa).

Belongs to the bacterial ribosomal protein bL19 family.

This protein is located at the 30S-50S ribosomal subunit interface and may play a role in the structure and function of the aminoacyl-tRNA binding site. This is Large ribosomal subunit protein bL19 from Ectopseudomonas mendocina (strain ymp) (Pseudomonas mendocina).